Reading from the N-terminus, the 163-residue chain is UPF0262 protein RPC_4416 (163 aa).

Belongs to the UPF0262 family.

The protein is UPF0262 protein RPC_4416 of Rhodopseudomonas palustris (strain BisB18).